Reading from the N-terminus, the 91-residue chain is UPF0250 protein NMA1380 (91 aa).

Belongs to the UPF0250 family.

This is UPF0250 protein NMA1380 from Neisseria meningitidis serogroup A / serotype 4A (strain DSM 15465 / Z2491).